Consider the following 265-residue polypeptide: uncharacterized protein (265 aa).

2 disordered regions span residues 21-53 (TLTH…LGPH) and 78-133 (HAPS…SSVS). Positions 90-101 (DDDDDDEDDDDS) are enriched in acidic residues. Positions 114-123 (SSSSSSSPRV) are enriched in low complexity. 137–144 (AILHQGKS) contributes to the ATP binding site.

This is an uncharacterized protein from Saccharomyces cerevisiae (strain ATCC 204508 / S288c) (Baker's yeast).